A 578-amino-acid chain; its full sequence is E3 ubiquitin-protein ligase Praja-1 (578 aa).

Residues 1–298 (MSHQERIASQ…KVPRRRRTMA (298 aa)) are disordered. 2 stretches are compositionally biased toward basic and acidic residues: residues 57 to 67 (DYSRYPPREYR) and 107 to 116 (KFKDDPEKGA). A compositionally biased stretch (polar residues) spans 151-163 (SKQNGSSASQISS). Threonine 231 carries the post-translational modification Phosphothreonine. Basic and acidic residues-rich tracts occupy residues 243 to 264 (RWRD…RGRG) and 273 to 290 (RYAE…ADKV). A phosphoserine mark is found at serine 317 and serine 319. Positions 332–397 (RSREQPQSSS…QASLEEGEIP (66 aa)) are disordered. The segment covering 359–373 (AGAGSLASAGSNGSG) has biased composition (low complexity). Residues 377–395 (EVQDPSLQEEEQASLEEGE) show a composition bias toward acidic residues. The RING-type zinc-finger motif lies at 530-571 (CPICCSEYVKGEVATELPCHHYFHKPCVSIWLQKSGTCPVCR).

Binds ubiquitin-conjugating enzymes (E2s). Binds, in vitro and in vivo, the MAGE conserved domain of MAGED1. Binds weakly Necdin, in vitro. Interacts with UBE2D2. Substrate for E2-dependent ubiquitination. As to expression, expressed in brain, liver, kidney. Highest levels in brain where it is found in many regions including cortical and subcortical areas and in neurons of the amygdala. Weak expression also found in testis. Also expressed in developing embryo.

The catalysed reaction is S-ubiquitinyl-[E2 ubiquitin-conjugating enzyme]-L-cysteine + [acceptor protein]-L-lysine = [E2 ubiquitin-conjugating enzyme]-L-cysteine + N(6)-ubiquitinyl-[acceptor protein]-L-lysine.. Its function is as follows. Has E2-dependent E3 ubiquitin-protein ligase activity. Ubiquitinates MAGED1 antigen leading to its subsequent degradation by proteasome. May be involved in protein sorting. The chain is E3 ubiquitin-protein ligase Praja-1 (Pja1) from Mus musculus (Mouse).